We begin with the raw amino-acid sequence, 375 residues long: tRNA(Met) cytidine acetate ligase (375 aa).

ATP contacts are provided by residues valine 7 to histidine 20, glycine 101, asparagine 151, and arginine 176.

It belongs to the TmcAL family.

The protein localises to the cytoplasm. The enzyme catalyses cytidine(34) in elongator tRNA(Met) + acetate + ATP = N(4)-acetylcytidine(34) in elongator tRNA(Met) + AMP + diphosphate. Its function is as follows. Catalyzes the formation of N(4)-acetylcytidine (ac(4)C) at the wobble position of elongator tRNA(Met), using acetate and ATP as substrates. First activates an acetate ion to form acetyladenylate (Ac-AMP) and then transfers the acetyl group to tRNA to form ac(4)C34. In Limosilactobacillus fermentum (strain NBRC 3956 / LMG 18251) (Lactobacillus fermentum), this protein is tRNA(Met) cytidine acetate ligase.